The primary structure comprises 211 residues: Claudin-7 (211 aa).

Residues Met-1–Gln-7 are Cytoplasmic-facing. The chain crosses the membrane as a helical span at residues Leu-8–Pro-28. At Gln-29 to Arg-81 the chain is on the extracellular side. The helical transmembrane segment at Ala-82–Met-102 threads the bilayer. Over Lys-103–Ala-119 the chain is Cytoplasmic. Residues Met-120 to Ile-140 traverse the membrane as a helical segment. The Extracellular segment spans residues Gly-141–Glu-160. The chain crosses the membrane as a helical span at residues Phe-161 to Leu-181. Residues Leu-182 to Val-211 lie on the Cytoplasmic side of the membrane. The segment at Tyr-210–Val-211 is interactions with TJP1, TJP2 and TJP3.

Belongs to the claudin family. In terms of assembly, directly interacts with TJP1/ZO-1, TJP2/ZO-2 and TJP3/ZO-3. The phosphorylated form interacts with EPCAM. Post-translationally, phosphorylated. In terms of tissue distribution, expressed predominantly in lung and kidney.

It is found in the cell membrane. It localises to the basolateral cell membrane. The protein resides in the cell junction. The protein localises to the tight junction. Its function is as follows. Plays a major role in tight junction-specific obliteration of the intercellular space, through calcium-independent cell-adhesion activity. In Mus musculus (Mouse), this protein is Claudin-7 (Cldn7).